The primary structure comprises 556 residues: Guanosine-diphosphatase (556 aa).

Over 1–12 (MTPTMKSIARRK) the chain is Cytoplasmic. A helical; Signal-anchor for type II membrane protein membrane pass occupies residues 13 to 33 (ALLIALSIFAVTFILWNGFPG). The Lumenal segment spans residues 34 to 556 (SSNRPLPSSN…GWNCNVKEEI (523 aa)). E256 serves as the catalytic Proton acceptor. N-linked (GlcNAc...) asparagine glycosylation is present at N372.

It belongs to the GDA1/CD39 NTPase family. Ca(2+) serves as cofactor. The cofactor is Mn(2+).

It localises to the golgi apparatus membrane. It catalyses the reaction GDP + H2O = GMP + phosphate + H(+). It participates in protein modification; protein glycosylation. In terms of biological role, after transfer of sugars to endogenous macromolecular acceptors, the enzyme converts nucleoside diphosphates to nucleoside monophosphates which in turn exit the Golgi lumen in a coupled antiporter reaction, allowing entry of additional nucleotide sugar from the cytosol. This is Guanosine-diphosphatase (gdp1) from Schizosaccharomyces pombe (strain 972 / ATCC 24843) (Fission yeast).